A 98-amino-acid chain; its full sequence is N(2)-fixation sustaining protein CowN (98 aa).

It belongs to the CowN family.

Functionally, is required to sustain N(2)-dependent growth in the presence of low levels of carbon monoxide (CO). Probably acts by protecting the N(2) fixation ability of the nitrogenase complex, which is inactivated in the presence of CO. The protein is N(2)-fixation sustaining protein CowN of Paramagnetospirillum magneticum (strain ATCC 700264 / AMB-1) (Magnetospirillum magneticum).